We begin with the raw amino-acid sequence, 419 residues long: L-rhamnose isomerase (419 aa).

Mn(2+)-binding residues include histidine 262, aspartate 294, and aspartate 296.

This sequence belongs to the rhamnose isomerase family. As to quaternary structure, homotetramer. Mn(2+) serves as cofactor.

Its subcellular location is the cytoplasm. It carries out the reaction L-rhamnopyranose = L-rhamnulose. Its pathway is carbohydrate degradation; L-rhamnose degradation; glycerone phosphate from L-rhamnose: step 1/3. Catalyzes the interconversion of L-rhamnose and L-rhamnulose. This is L-rhamnose isomerase from Escherichia coli O157:H7.